The chain runs to 220 residues: Small ribosomal subunit protein uS3 (220 aa).

The KH type-2 domain maps to 38–106; the sequence is IREFVKKSLN…EVFLNIVEVR (69 aa).

Belongs to the universal ribosomal protein uS3 family. Part of the 30S ribosomal subunit. Forms a tight complex with proteins S10 and S14.

Its function is as follows. Binds the lower part of the 30S subunit head. Binds mRNA in the 70S ribosome, positioning it for translation. The sequence is that of Small ribosomal subunit protein uS3 from Myxococcus xanthus (strain DK1622).